The primary structure comprises 418 residues: Tyrosine--tRNA ligase (418 aa).

Positions Pro42–His51 match the 'HIGH' region motif. Positions Lys226–Ser230 match the 'KMSKS' region motif. An ATP-binding site is contributed by Lys229. Residues Val339–Leu400 enclose the S4 RNA-binding domain.

It belongs to the class-I aminoacyl-tRNA synthetase family. TyrS type 2 subfamily. Homodimer.

The protein localises to the cytoplasm. The enzyme catalyses tRNA(Tyr) + L-tyrosine + ATP = L-tyrosyl-tRNA(Tyr) + AMP + diphosphate + H(+). Functionally, catalyzes the attachment of tyrosine to tRNA(Tyr) in a two-step reaction: tyrosine is first activated by ATP to form Tyr-AMP and then transferred to the acceptor end of tRNA(Tyr). The sequence is that of Tyrosine--tRNA ligase from Xylella fastidiosa (strain Temecula1 / ATCC 700964).